The primary structure comprises 122 residues: Small ribosomal subunit protein uS13 (122 aa).

Positions 93–122 (RRSLPVRGQRTHTNARTRKGPAKPIAGKKK) are disordered.

Belongs to the universal ribosomal protein uS13 family. In terms of assembly, part of the 30S ribosomal subunit. Forms a loose heterodimer with protein S19. Forms two bridges to the 50S subunit in the 70S ribosome.

Located at the top of the head of the 30S subunit, it contacts several helices of the 16S rRNA. In the 70S ribosome it contacts the 23S rRNA (bridge B1a) and protein L5 of the 50S subunit (bridge B1b), connecting the 2 subunits; these bridges are implicated in subunit movement. Contacts the tRNAs in the A and P-sites. This chain is Small ribosomal subunit protein uS13, found in Chelativorans sp. (strain BNC1).